A 260-amino-acid polypeptide reads, in one-letter code: 3-methyl-2-oxobutanoate hydroxymethyltransferase (260 aa).

Aspartate 42 and aspartate 81 together coordinate Mg(2+). 3-methyl-2-oxobutanoate is bound by residues 42-43 (DS), aspartate 81, and lysine 109. Residue glutamate 111 participates in Mg(2+) binding. Catalysis depends on glutamate 178, which acts as the Proton acceptor.

It belongs to the PanB family. As to quaternary structure, homodecamer; pentamer of dimers. Requires Mg(2+) as cofactor.

The protein resides in the cytoplasm. The enzyme catalyses 3-methyl-2-oxobutanoate + (6R)-5,10-methylene-5,6,7,8-tetrahydrofolate + H2O = 2-dehydropantoate + (6S)-5,6,7,8-tetrahydrofolate. It participates in cofactor biosynthesis; (R)-pantothenate biosynthesis; (R)-pantoate from 3-methyl-2-oxobutanoate: step 1/2. In terms of biological role, catalyzes the reversible reaction in which hydroxymethyl group from 5,10-methylenetetrahydrofolate is transferred onto alpha-ketoisovalerate to form ketopantoate. The sequence is that of 3-methyl-2-oxobutanoate hydroxymethyltransferase from Vesicomyosocius okutanii subsp. Calyptogena okutanii (strain HA).